The chain runs to 476 residues: Glycogen synthase (476 aa).

Lys-15 is an ADP-alpha-D-glucose binding site.

It belongs to the glycosyltransferase 1 family. Bacterial/plant glycogen synthase subfamily.

It carries out the reaction [(1-&gt;4)-alpha-D-glucosyl](n) + ADP-alpha-D-glucose = [(1-&gt;4)-alpha-D-glucosyl](n+1) + ADP + H(+). Its pathway is glycan biosynthesis; glycogen biosynthesis. Functionally, synthesizes alpha-1,4-glucan chains using ADP-glucose. The polypeptide is Glycogen synthase (Mycoplasma mobile (strain ATCC 43663 / 163K / NCTC 11711) (Mesomycoplasma mobile)).